The primary structure comprises 299 residues: Capsid protein (299 aa).

Positions 1–46 are disordered; it reads MPPKVAPESSDAVSSQEQPQRPPPATPPVPTPPPGRREEVGDRAED. The span at 20–34 shows a compositional bias: pro residues; the sequence is QRPPPATPPVPTPPP. Residues 35–46 show a composition bias toward basic and acidic residues; it reads GRREEVGDRAED.

It belongs to the potexviruses coat protein family.

It is found in the virion. Required for genome encapsidation. Forms ribonucleoprotein complexes along with TGB1 helicase and viral RNA. The protein is Capsid protein of Helenium virus S (HelVS).